The chain runs to 323 residues: Methionyl-tRNA formyltransferase (323 aa).

A (6S)-5,6,7,8-tetrahydrofolate-binding site is contributed by 117 to 120; it reads SLLP.

This sequence belongs to the Fmt family.

It catalyses the reaction L-methionyl-tRNA(fMet) + (6R)-10-formyltetrahydrofolate = N-formyl-L-methionyl-tRNA(fMet) + (6S)-5,6,7,8-tetrahydrofolate + H(+). Attaches a formyl group to the free amino group of methionyl-tRNA(fMet). The formyl group appears to play a dual role in the initiator identity of N-formylmethionyl-tRNA by promoting its recognition by IF2 and preventing the misappropriation of this tRNA by the elongation apparatus. The polypeptide is Methionyl-tRNA formyltransferase (Albidiferax ferrireducens (strain ATCC BAA-621 / DSM 15236 / T118) (Rhodoferax ferrireducens)).